The primary structure comprises 184 residues: Inosine triphosphate pyrophosphatase (184 aa).

Residue 9 to 14 coordinates ITP; the sequence is TSNASK. Residue Glu-38 coordinates Mg(2+). ITP contacts are provided by residues Lys-50, 66–67, Lys-83, 142–145, Lys-163, and 168–169; these read DT, FGWD, and HR.

It belongs to the HAM1 NTPase family. In terms of assembly, homodimer. It depends on Mg(2+) as a cofactor. Mn(2+) serves as cofactor.

It localises to the cytoplasm. Its subcellular location is the nucleus. It catalyses the reaction ITP + H2O = IMP + diphosphate + H(+). It carries out the reaction dITP + H2O = dIMP + diphosphate + H(+). The enzyme catalyses XTP + H2O = XMP + diphosphate + H(+). Pyrophosphatase that hydrolyzes non-canonical purine nucleotides such as inosine triphosphate (ITP), deoxyinosine triphosphate (dITP) or xanthosine 5'-triphosphate (XTP) to their respective monophosphate derivatives. The enzyme does not distinguish between the deoxy- and ribose forms. Probably excludes non-canonical purines from RNA and DNA precursor pools, thus preventing their incorporation into RNA and DNA and avoiding chromosomal lesions. This is Inosine triphosphate pyrophosphatase from Tuber melanosporum (strain Mel28) (Perigord black truffle).